The primary structure comprises 250 residues: Lymphocyte function-associated antigen 3 (250 aa).

The signal sequence occupies residues 1-28 (MVAGSDAGRALGVLSVVCLLHCFGFISC). The Extracellular segment spans residues 29–215 (FSQQIYGVVY…IPSSGHSRHR (187 aa)). One can recognise an Ig-like domain in the interval 30 to 121 (SQQIYGVVYG…DTMKFFLYVL (92 aa)). Asparagine 40, asparagine 94, asparagine 109, asparagine 135, asparagine 169, and asparagine 195 each carry an N-linked (GlcNAc...) asparagine glycan. A disulfide bridge links cysteine 142 with cysteine 187. The helical transmembrane segment at 216–238 (YALIPIPLAVITTCIVLYMNGIL) threads the bilayer. The Cytoplasmic segment spans residues 239–250 (KCDRKPDRTNSN).

Interacts with CD2. Interacts with CMTM6. In terms of assembly, (Microbial infection) Interacts with human cytomegalovirus protein UL148; this interaction retains immature CD58 intracellularly.

It localises to the cell membrane. Its function is as follows. Ligand of the T-lymphocyte CD2 glycoprotein. This interaction is important in mediating thymocyte interactions with thymic epithelial cells, antigen-independent and -dependent interactions of T-lymphocytes with target cells and antigen-presenting cells and the T-lymphocyte rosetting with erythrocytes. In addition, the LFA-3/CD2 interaction may prime response by both the CD2+ and LFA-3+ cells. The protein is Lymphocyte function-associated antigen 3 (CD58) of Homo sapiens (Human).